Here is a 230-residue protein sequence, read N- to C-terminus: E3 ubiquitin-protein ligase RNF114 (230 aa).

An RING-type zinc finger spans residues 31–70 (CPVCLEVYEKPVQVPCGHVFCSACLQECLKPKKPVCGVCR). Cys93 and Cys96 together coordinate Zn(2+). The C2HC RNF-type zinc finger occupies 93 to 112 (CHGCRKNFFLSKIRAHVATC). An N6-acetyllysine modification is found at Lys104. Residues His108 and Cys112 each coordinate Zn(2+). At Lys114 the chain carries N6-acetyllysine.

Interacts with XAF1, the interaction increases XAF1 stability and proapoptotic effects, and may regulate IFN signaling. In terms of processing, autoubiquitinated. Polyubiquitinated in the presence of E2 enzymes UBE2D1, UBE2D2 and UBE2D3, but only monoubiquitinated in the presence of UBE2E1.

The protein resides in the cytoplasm. It is found in the nucleus. The enzyme catalyses S-ubiquitinyl-[E2 ubiquitin-conjugating enzyme]-L-cysteine + [acceptor protein]-L-lysine = [E2 ubiquitin-conjugating enzyme]-L-cysteine + N(6)-ubiquitinyl-[acceptor protein]-L-lysine.. The protein operates within protein modification; protein ubiquitination. E3 ubiquitin-protein ligase that promotes the ubiquitination of various substrates. In turn, participates in the regulation of many biological processes including cell cycle, apoptosis, osteoclastogenesis as well as innate or adaptive immunity. Acts as negative regulator of NF-kappa-B-dependent transcription by promoting the ubiquitination and stabilization of the NF-kappa-B inhibitor TNFAIP3. May promote the ubiquitination of TRAF6 as well. Also acts as a negative regulator of T-cell activation. Inhibits cellular dsRNA responses and interferon production by targeting MAVS component for proteasomal degradation. Ubiquitinates the CDK inhibitor CDKN1A leading to its degradationand probably also CDKN1B and CDKN1C. This activity stimulates cell cycle G1-to-S phase transition and suppresses cellular senescence. May play a role in spermatogenesis. The polypeptide is E3 ubiquitin-protein ligase RNF114 (RNF114) (Bos taurus (Bovine)).